The chain runs to 375 residues: Antichymotrypsin-2 (375 aa).

This sequence belongs to the serpin family. In terms of tissue distribution, hemolymph.

The protein localises to the secreted. This Bombyx mori (Silk moth) protein is Antichymotrypsin-2.